Reading from the N-terminus, the 408-residue chain is Indian hedgehog protein (408 aa).

The signal sequence occupies residues 1-23 (MKPARLLLLLSGCALLLAPAVRC). A lipid anchor (N-palmitoyl cysteine) is attached at Cys24. Positions 90, 91, 96, 126, 127, 130, and 132 each coordinate Ca(2+). His141, Asp148, and His183 together coordinate Zn(2+). Residue Gly198 is the site of Cholesterol glycine ester attachment.

The protein belongs to the hedgehog family. In terms of assembly, multimer. Interacts with BOC and CDON. Interacts with PTCH1. Interacts with glypican GPC3. Post-translationally, cholesterylation is required for N-product targeting to lipid rafts and multimerization. In terms of processing, the C-terminal domain displays an autoproteolysis activity and a cholesterol transferase activity. Both activities result in the cleavage of the full-length protein and covalent attachment of a cholesterol moiety to the C-terminal of the newly generated N-product. The N-product is the active species in both local and long-range signaling, whereas the C-product is degraded in the endoplasmic reticulum. N-palmitoylation by HHAT of N-product is required for indian hedgehog protein N-product multimerization and full activity. In terms of tissue distribution, expressed in developing midgut, lung and cartilage of developing long bones in the limb.

It is found in the cell membrane. The protein resides in the endoplasmic reticulum membrane. The protein localises to the golgi apparatus membrane. It localises to the secreted. The enzyme catalyses glycyl-L-cysteinyl-[protein] + cholesterol + H(+) = [protein]-C-terminal glycyl cholesterol ester + N-terminal L-cysteinyl-[protein]. Its function is as follows. Plays a role in embryonic morphogenesis; it is involved in the regulation of endochondral skeleton formation, and the development of retinal pigment epithelium (RPE), photoreceptors and periocular tissues. In terms of biological role, the C-terminal part of the indian hedgehog protein precursor displays an autoproteolysis and a cholesterol transferase activity. Both activities result in the cleavage of the full-length protein into two parts followed by the covalent attachment of a cholesterol moiety to the C-terminal of the newly generated N-product. Both activities occur in the endoplasmic reticulum. Functionally, the dually lipidated indian hedgehog protein N-product is a morphogen which is essential for a variety of patterning events during development. Binds to the patched (PTCH1) receptor, which functions in association with smoothened (SMO), to activate the transcription of target genes. Plays a role in morphogenesis of the skeleton by coordinating growth and differentiation of the endochondral skeleton. Positively regulates PTHLH expression during endochondral bone formation preventing chondrocyte hypertrophy. In contrast, participates in normal chondrocyte proliferation in a PTHLH-independent pathway. In Gallus gallus (Chicken), this protein is Indian hedgehog protein.